The primary structure comprises 433 residues: Cysteine--tRNA ligase (433 aa).

A Zn(2+)-binding site is contributed by cysteine 4. The 'HIGH' region motif lies at proline 6 to asparagine 16. Zn(2+) is bound by residues cysteine 188, histidine 213, and glutamate 217. The short motif at lysine 246–serine 250 is the 'KMSKS' region element. Residue lysine 249 coordinates ATP.

It belongs to the class-I aminoacyl-tRNA synthetase family. Monomer. It depends on Zn(2+) as a cofactor.

It localises to the cytoplasm. The enzyme catalyses tRNA(Cys) + L-cysteine + ATP = L-cysteinyl-tRNA(Cys) + AMP + diphosphate. The protein is Cysteine--tRNA ligase of Wolbachia sp. subsp. Brugia malayi (strain TRS).